Consider the following 75-residue polypeptide: Alpha-elapitoxin-Bc2b (75 aa).

Positions 1-2 (YT) are cleaved as a signal peptide. 5 cysteine pairs are disulfide-bonded: cysteine 5/cysteine 24, cysteine 17/cysteine 45, cysteine 30/cysteine 34, cysteine 49/cysteine 60, and cysteine 61/cysteine 66.

As to quaternary structure, monomer in solution, homodimer in crystal state. In terms of tissue distribution, expressed by the venom gland.

Its subcellular location is the secreted. In terms of biological role, binds to muscular and neuronal nicotinic acetylcholine receptor (nAChR) and inhibits acetylcholine from binding to the receptor, thereby impairing neuromuscular and neuronal transmission. Blocks muscle type nAChR. Also binds with high affinity to alpha-7/CHRNA7 nAChRs. In addition, shows a weak inhibition of neuronal alpha-3-beta-2/CHRNA3-CHRNB2 nAChR. Selectively binds to alpha-1-delta subunit interface of the mouse muscle nicotinic acetylcholine receptor, with a 10-fold higher affinity for the adult than for the fetal receptors. In vivo, when intraperitoneally injected into mice, causes flaccid paralysis and respiratory distress, followed by death within 2-4 hours. The sequence is that of Alpha-elapitoxin-Bc2b from Bungarus candidus (Malayan krait).